The primary structure comprises 440 residues: uncharacterized protein (440 aa).

A run of 10 helical transmembrane segments spans residues 1–21, 29–49, 70–90, 101–121, 179–199, 226–246, 258–278, 343–363, 366–386, and 389–409; these read MLLV…QLYR, TVFI…SAFE, LLQM…IARI, VGVL…GIAM, TSII…LSLG, FVIR…AATS, IVAS…LLFF, IYPA…PFSF, ILTL…VGGG, and FAAI…GLLI.

This sequence belongs to the dicarboxylate/amino acid:cation symporter (DAACS) (TC 2.A.23) family.

It localises to the cell membrane. This is an uncharacterized protein from Haemophilus influenzae (strain ATCC 51907 / DSM 11121 / KW20 / Rd).